Consider the following 120-residue polypeptide: Chemokine vCXCL1 (120 aa).

This sequence belongs to the intercrine alpha (chemokine CxC) family. As to quaternary structure, interacts with host CXCR1 and CXCR2.

Functionally, acts as a functional chemokine, inducing calcium mobilization, chemotaxis, and degranulation of neutrophils. Contributes to the induction of neutrophil chemotaxis by interacting with host CXCR1 and CXCR2 receptors. This Human cytomegalovirus (strain Merlin) (HHV-5) protein is Chemokine vCXCL1 (UL146).